We begin with the raw amino-acid sequence, 330 residues long: Diacylglycerol acyltransferase/mycolyltransferase Ag85B (330 aa).

Positions 1-40 are cleaved as a signal peptide; the sequence is MTDLSEKVRAWGRRLLVGAAAAVTLPGLIGLAGGAATANA. Substrate is bound at residue 82–83; it reads LR. Residues 98–108 are fibronectin-binding; that stretch reads FEWYYQSGLSV. Cys-127 and Cys-132 are joined by a disulfide. 2 residues coordinate substrate: Ser-166 and Asp-194. Ser-166 serves as the catalytic Nucleophile. Residue Glu-270 is part of the active site. Residues 272–275, Lys-279, and 302–304 contribute to the substrate site; these read FVRS and HSW. Residue His-302 is part of the active site.

This sequence belongs to the mycobacterial A85 antigen family.

The protein localises to the secreted. The enzyme catalyses 2 alpha,alpha'-trehalose 6-mycolate = alpha,alpha'-trehalose 6,6'-bismycolate + alpha,alpha-trehalose. It catalyses the reaction an acyl-CoA + a 1,2-diacyl-sn-glycerol = a triacyl-sn-glycerol + CoA. Functionally, the antigen 85 proteins (FbpA, FbpB, FbpC) are responsible for the high affinity of mycobacteria for fibronectin, a large adhesive glycoprotein, which facilitates the attachment of M.tuberculosis to murine alveolar macrophages (AMs). They also help to maintain the integrity of the cell wall by catalyzing the transfer of mycolic acids to cell wall arabinogalactan and through the synthesis of alpha,alpha-trehalose dimycolate (TDM, cord factor). They catalyze the transfer of a mycoloyl residue from one molecule of alpha,alpha-trehalose monomycolate (TMM) to another TMM, leading to the formation of TDM. This is Diacylglycerol acyltransferase/mycolyltransferase Ag85B (fbpB) from Mycobacterium avium.